We begin with the raw amino-acid sequence, 484 residues long: MLLRSLTSAFVLSAGLAQAASSSNSSTPSIEIKGNAFFNSESGERFYIRGVDYQPGGSSNLTDPLADASVCDRDVPVLKDLGINTVRVYTVDNSQDHSHCMKLLQENGIYLILDVNTPTSAISRYDPACSYNADYLQNVFATIDTFADYDNVLGFFAGNEVINSVNTTNTATYVKAVVRDMKKYIKARKYRQIPVGYSAADIVANRQLAAEYFNCGDEADARIDMFGVNDYSWCGESSFVVSGYSTKMKLYQDYSVPVFLSEFGCNQVKSSRPFTEIEAIYSTQMSSVFSGGLVYEYSNETNNYGLVQIDGDKVTKLTDFENLKNEYSKVSNPEGNGGYSTSNNYSTCPDYEKGVWEANNTLPAMPSAASAYFTSGAGSPMGTGIATQQSCDAKDDDDEEDDDTSSSSSSSSSSSSSASSSSESSSSTSKASSSSPSASETSLLKSAASATSSSQSSSKSKGAAGIIEIPLIFRALAELYNLVL.

A signal peptide spans 1-19 (MLLRSLTSAFVLSAGLAQA). Asparagine 24 and asparagine 60 each carry an N-linked (GlcNAc...) asparagine glycan. Cysteine 71 and cysteine 100 are joined by a disulfide. (1,3-beta-D-glucosyl)n is bound by residues tyrosine 89, asparagine 159, and glutamate 160. The active-site Proton donor is the glutamate 160. Asparagine 166 carries an N-linked (GlcNAc...) asparagine glycan. (1,3-beta-D-glucosyl)n is bound by residues aspartate 201 and arginine 206. 2 cysteine pairs are disulfide-bonded: cysteine 215–cysteine 348 and cysteine 234–cysteine 265. Catalysis depends on glutamate 262, which acts as the Nucleophile. Tyrosine 295 contributes to the (1,3-beta-D-glucosyl)n binding site. Asparagine 299, asparagine 344, and asparagine 359 each carry an N-linked (GlcNAc...) asparagine glycan. The segment at 383 to 462 (TGIATQQSCD…SSQSSSKSKG (80 aa)) is disordered. Acidic residues predominate over residues 394–404 (KDDDDEEDDDT). Over residues 405 to 462 (SSSSSSSSSSSSSASSSSESSSSTSKASSSSPSASETSLLKSAASATSSSQSSSKSKG) the composition is skewed to low complexity. Residue glycine 462 is the site of GPI-anchor amidated glycine attachment. Residues 463–484 (AAGIIEIPLIFRALAELYNLVL) constitute a propeptide, removed in mature form.

It belongs to the glycosyl hydrolase 72 family. Post-translationally, the GPI-anchor is attached to the protein in the endoplasmic reticulum and serves to target the protein to the cell surface. There, the glucosamine-inositol phospholipid moiety is cleaved off and the GPI-modified mannoprotein is covalently attached via its lipidless GPI glycan remnant to the 1,6-beta-glucan of the outer cell wall layer.

The protein resides in the secreted. It localises to the cell wall. It is found in the membrane. Its function is as follows. Splits internally a 1,3-beta-glucan molecule and transfers the newly generated reducing end (the donor) to the non-reducing end of another 1,3-beta-glucan molecule (the acceptor) forming a 1,3-beta linkage, resulting in the elongation of 1,3-beta-glucan chains in the cell wall. Involved in cell wall biosynthesis and morphogenesis. The sequence is that of 1,3-beta-glucanosyltransferase GAS5 (GAS5) from Saccharomyces cerevisiae (strain ATCC 204508 / S288c) (Baker's yeast).